The primary structure comprises 104 residues: Membrane magnesium transporter (104 aa).

Topologically, residues 1-2 (MN) are cytoplasmic. A helical membrane pass occupies residues 3–23 (LGFLVGVFGVLILSHAAYSTI). Topologically, residues 24-40 (QYRGLLKIMEEEFSRPP) are lumenal. A helical membrane pass occupies residues 41-61 (INVILELIIGLALCMWAALTF). Residues 62 to 104 (PGKFLSIHPDSDENRAVFLPDNSDFMIFNHRGRLFPPQIDMKF) lie on the Cytoplasmic side of the membrane.

The protein belongs to the membrane magnesium transporter (TC 1.A.67) family. Component of the ER membrane protein complex (EMC).

The protein resides in the endoplasmic reticulum membrane. The protein localises to the golgi apparatus membrane. It localises to the early endosome membrane. Functionally, mediates Mg(2+) transport. This Arabidopsis thaliana (Mouse-ear cress) protein is Membrane magnesium transporter.